Here is a 195-residue protein sequence, read N- to C-terminus: Peptide methionine sulfoxide reductase MsrA 2 (195 aa).

Cysteine 18 is an active-site residue.

The protein belongs to the MsrA Met sulfoxide reductase family.

It catalyses the reaction L-methionyl-[protein] + [thioredoxin]-disulfide + H2O = L-methionyl-(S)-S-oxide-[protein] + [thioredoxin]-dithiol. The enzyme catalyses [thioredoxin]-disulfide + L-methionine + H2O = L-methionine (S)-S-oxide + [thioredoxin]-dithiol. Its function is as follows. Has an important function as a repair enzyme for proteins that have been inactivated by oxidation. Catalyzes the reversible oxidation-reduction of methionine sulfoxide in proteins to methionine. The sequence is that of Peptide methionine sulfoxide reductase MsrA 2 (msrA2) from Mesorhizobium japonicum (strain LMG 29417 / CECT 9101 / MAFF 303099) (Mesorhizobium loti (strain MAFF 303099)).